We begin with the raw amino-acid sequence, 261 residues long: MSYSNSNPENYSAATSSPELKLYQAFIFSVPICFTFIILFLFYLIYLRRSSSDLSSLGMRTTFIPGNSLSTIELGLSKELREMLPIVVFKESFTVMDSQCSVCLGDYQPNDKLQQIPVCKHTFHMDCIDLWLTSHTTCPLCRLALIPSRSRQSQDDPVPSLVSPDEEVSSQPESEPVNHRVVSTQPESEPVNHSGVSSQPESQPVVNHRGVSSQPESQPVNHINDGHEQQCDQDVEGFKEMEEDERNNIGTSSACCSCRTG.

Residues 25 to 45 (AFIFSVPICFTFIILFLFYLI) form a helical membrane-spanning segment. Residues 100–142 (CSVCLGDYQPNDKLQQIPVCKHTFHMDCIDLWLTSHTTCPLCR) form an RING-type; atypical zinc finger. 2 disordered regions span residues 149–227 (RSRQ…NDGH) and 241–261 (MEED…CRTG). Residues 194–221 (SGVSSQPESQPVVNHRGVSSQPESQPVN) are compositionally biased toward polar residues.

Belongs to the RING-type zinc finger family. ATL subfamily.

The protein localises to the membrane. The enzyme catalyses S-ubiquitinyl-[E2 ubiquitin-conjugating enzyme]-L-cysteine + [acceptor protein]-L-lysine = [E2 ubiquitin-conjugating enzyme]-L-cysteine + N(6)-ubiquitinyl-[acceptor protein]-L-lysine.. It functions in the pathway protein modification; protein ubiquitination. This is RING-H2 finger protein ATL58 (ATL58) from Arabidopsis thaliana (Mouse-ear cress).